The following is a 155-amino-acid chain: Small ribosomal subunit protein uS7cz/uS7cy (155 aa).

It belongs to the universal ribosomal protein uS7 family. In terms of assembly, part of the 30S ribosomal subunit.

The protein localises to the plastid. The protein resides in the chloroplast. Its function is as follows. One of the primary rRNA binding proteins, it binds directly to 16S rRNA where it nucleates assembly of the head domain of the 30S subunit. The polypeptide is Small ribosomal subunit protein uS7cz/uS7cy (rps7-A) (Guizotia abyssinica (Niger)).